Consider the following 381-residue polypeptide: Outer membrane protein assembly factor BamB (381 aa).

The signal sequence occupies residues 1–22 (MNLLKRYAAPVACAAAVLVFAA). Cys-23 is lipidated: N-palmitoyl cysteine. Cys-23 is lipidated: S-diacylglycerol cysteine.

It belongs to the BamB family. Part of the Bam complex.

The protein localises to the cell outer membrane. Part of the outer membrane protein assembly complex, which is involved in assembly and insertion of beta-barrel proteins into the outer membrane. This chain is Outer membrane protein assembly factor BamB, found in Burkholderia pseudomallei (strain K96243).